Reading from the N-terminus, the 361-residue chain is Phospho-N-acetylmuramoyl-pentapeptide-transferase (361 aa).

The next 10 membrane-spanning stretches (helical) occupy residues 25-45 (TGGA…WIID), 72-92 (TPTM…LLWA), 95-115 (LNPY…VGFY), 135-155 (LLIE…LGRA), 169-189 (VMLN…VGAG), 200-220 (GLAI…SYLA), 240-260 (LAVL…FNAP), 264-284 (IFMG…IAVA), 289-309 (IVLA…IVQV), and 338-358 (QIVI…LSTL).

The protein belongs to the glycosyltransferase 4 family. MraY subfamily. Requires Mg(2+) as cofactor.

The protein resides in the cell inner membrane. The enzyme catalyses UDP-N-acetyl-alpha-D-muramoyl-L-alanyl-gamma-D-glutamyl-meso-2,6-diaminopimeloyl-D-alanyl-D-alanine + di-trans,octa-cis-undecaprenyl phosphate = di-trans,octa-cis-undecaprenyl diphospho-N-acetyl-alpha-D-muramoyl-L-alanyl-D-glutamyl-meso-2,6-diaminopimeloyl-D-alanyl-D-alanine + UMP. It participates in cell wall biogenesis; peptidoglycan biosynthesis. In terms of biological role, catalyzes the initial step of the lipid cycle reactions in the biosynthesis of the cell wall peptidoglycan: transfers peptidoglycan precursor phospho-MurNAc-pentapeptide from UDP-MurNAc-pentapeptide onto the lipid carrier undecaprenyl phosphate, yielding undecaprenyl-pyrophosphoryl-MurNAc-pentapeptide, known as lipid I. In Rhodopseudomonas palustris (strain ATCC BAA-98 / CGA009), this protein is Phospho-N-acetylmuramoyl-pentapeptide-transferase.